The chain runs to 394 residues: Ornithine aminotransferase 1 (394 aa).

Lys252 carries the N6-(pyridoxal phosphate)lysine modification.

Belongs to the class-III pyridoxal-phosphate-dependent aminotransferase family. OAT subfamily. Pyridoxal 5'-phosphate serves as cofactor.

Its subcellular location is the cytoplasm. The catalysed reaction is a 2-oxocarboxylate + L-ornithine = L-glutamate 5-semialdehyde + an L-alpha-amino acid. It functions in the pathway amino-acid biosynthesis; L-proline biosynthesis; L-glutamate 5-semialdehyde from L-ornithine: step 1/1. Functionally, catalyzes the interconversion of ornithine to glutamate semialdehyde. The chain is Ornithine aminotransferase 1 from Staphylococcus aureus (strain MRSA252).